The chain runs to 194 residues: Adenylate kinase isoenzyme 1 (194 aa).

19 to 24 lines the ATP pocket; that stretch reads GSGKGT. The segment at 39-68 is NMP; it reads STGDLLRAEVSSGSERGKKLQAIMEKGELV. AMP contacts are provided by residues Thr-40, Arg-45, 66–68, 95–98, and Gln-102; these read ELV and GYPR. The segment at 132–142 is LID; that stretch reads KRGETSGRVDD. An ATP-binding site is contributed by Arg-133. Residues Arg-139 and Arg-150 each contribute to the AMP site. Gly-178 contacts ATP.

Belongs to the adenylate kinase family. AK1 subfamily. As to quaternary structure, monomer. Requires Mg(2+) as cofactor. In terms of tissue distribution, skeletal muscle.

Its subcellular location is the cytoplasm. The catalysed reaction is a ribonucleoside 5'-phosphate + ATP = a ribonucleoside 5'-diphosphate + ADP. The enzyme catalyses AMP + ATP = 2 ADP. It catalyses the reaction dAMP + ATP = dADP + ADP. It carries out the reaction dATP + AMP = dADP + ADP. The catalysed reaction is dAMP + dATP = 2 dADP. The enzyme catalyses a 2'-deoxyribonucleoside 5'-diphosphate + ATP = a 2'-deoxyribonucleoside 5'-triphosphate + ADP. It catalyses the reaction a ribonucleoside 5'-diphosphate + ATP = a ribonucleoside 5'-triphosphate + ADP. It carries out the reaction CDP + GTP = CTP + GDP. The catalysed reaction is GDP + ATP = GTP + ADP. The enzyme catalyses UDP + ATP = UTP + ADP. It catalyses the reaction GTP + UDP = UTP + GDP. It carries out the reaction dTDP + GTP = dTTP + GDP. The catalysed reaction is dCDP + GTP = dCTP + GDP. The enzyme catalyses dGDP + ATP = dGTP + ADP. It catalyses the reaction dADP + GTP = dATP + GDP. It carries out the reaction thiamine diphosphate + ADP = thiamine triphosphate + AMP. Catalyzes the reversible transfer of the terminal phosphate group between ATP and AMP. Also displays broad nucleoside diphosphate kinase activity. Plays an important role in cellular energy homeostasis and in adenine nucleotide metabolism. Also catalyzes at a very low rate the synthesis of thiamine triphosphate (ThTP) from thiamine diphosphate (ThDP) and ADP. The protein is Adenylate kinase isoenzyme 1 of Gallus gallus (Chicken).